Reading from the N-terminus, the 211-residue chain is tRNA (guanine-N(7)-)-methyltransferase (211 aa).

E44, D69, D96, and D118 together coordinate S-adenosyl-L-methionine. D118 is a catalytic residue. K122 serves as a coordination point for substrate. The interval 124 to 129 (RHEKRR) is interaction with RNA. Substrate is bound by residues D154 and 191–194 (TEYE).

The protein belongs to the class I-like SAM-binding methyltransferase superfamily. TrmB family.

The enzyme catalyses guanosine(46) in tRNA + S-adenosyl-L-methionine = N(7)-methylguanosine(46) in tRNA + S-adenosyl-L-homocysteine. The protein operates within tRNA modification; N(7)-methylguanine-tRNA biosynthesis. Its function is as follows. Catalyzes the formation of N(7)-methylguanine at position 46 (m7G46) in tRNA. The protein is tRNA (guanine-N(7)-)-methyltransferase of Streptococcus equi subsp. zooepidemicus (strain H70).